We begin with the raw amino-acid sequence, 124 residues long: Small ribosomal subunit protein uS13 (124 aa).

Positions 95–124 are disordered; sequence GLPVRGQRTKTNARTRKGPKRTIAGKKKAR.

Belongs to the universal ribosomal protein uS13 family. Part of the 30S ribosomal subunit. Forms a loose heterodimer with protein S19. Forms two bridges to the 50S subunit in the 70S ribosome.

In terms of biological role, located at the top of the head of the 30S subunit, it contacts several helices of the 16S rRNA. In the 70S ribosome it contacts the 23S rRNA (bridge B1a) and protein L5 of the 50S subunit (bridge B1b), connecting the 2 subunits; these bridges are implicated in subunit movement. Contacts the tRNAs in the A and P-sites. This chain is Small ribosomal subunit protein uS13, found in Mycobacterium marinum (strain ATCC BAA-535 / M).